The sequence spans 89 residues: Barrier-to-autointegration factor (89 aa).

Met-1 is modified (N-acetylmethionine). Thr-2 carries the post-translational modification N-acetylthreonine; in Barrier-to-autointegration factor, N-terminally processed. 2 positions are modified to phosphothreonine; by VRK1 and VRK2: Thr-2 and Thr-3. The residue at position 4 (Ser-4) is a Phosphoserine; by VRK1 and VRK2. The HhH domain occupies 20–35 (VGSLAGIGDVLSKRLE).

This sequence belongs to the BAF family. As to quaternary structure, homodimer. Heterodimerizes with BANF2. Interacts with ANKLE2/LEM4, leading to decreased phosphorylation by VRK1 and promoting dephosphorylation by protein phosphatase 2A (PP2A). Binds non-specifically to double-stranded DNA, and is found as a hexamer or dodecamer upon DNA binding. Binds to LEM domain-containing nuclear proteins such as LEMD3/MAN1, TMPO/LAP2 and EMD (emerin). Interacts with ANKLE1 (via LEM domain); the interaction may favor BANF1 dimerization. Interacts with CRX and LMNA (lamin-A). Binds linker histone H1.1 and core histones H3. Interacts with LEMD2 (via LEM domain). Interacts with PARP1; interaction takes place in response to oxidative DNA damage. In terms of processing, ser-4 is the major site of phosphorylation as compared to Thr-2 and Thr-3. Phosphorylation on Thr-2; Thr-3 and Ser-4 disrupts its ability to bind DNA and reduces its ability to bind LEM domain-containing proteins. Non phosphorylated BAF seems to enhance binding between EMD and LMNA. Dephosphorylated by protein phosphatase 2A (PP2A) following interaction with ANKLE2/LEM4 during mitotic exit, leading to mitotic nuclear envelope reassembly.

It is found in the nucleus. The protein resides in the chromosome. It localises to the nucleus envelope. The protein localises to the cytoplasm. In terms of biological role, non-specific DNA-binding protein that plays key roles in mitotic nuclear reassembly, chromatin organization, DNA damage response, gene expression and intrinsic immunity against foreign DNA. Contains two non-specific double-stranded DNA (dsDNA)-binding sites which promote DNA cross-bridging. Plays a key role in nuclear membrane reformation at the end of mitosis by driving formation of a single nucleus in a spindle-independent manner. Transiently cross-bridges anaphase chromosomes via its ability to bridge distant DNA sites, leading to the formation of a dense chromatin network at the chromosome ensemble surface that limits membranes to the surface. Also acts as a negative regulator of innate immune activation by restricting CGAS activity toward self-DNA upon acute loss of nuclear membrane integrity. Outcompetes CGAS for DNA-binding, thereby preventing CGAS activation and subsequent damaging autoinflammatory responses. Also involved in DNA damage response: interacts with PARP1 in response to oxidative stress, thereby inhibiting the ADP-ribosyltransferase activity of PARP1. Involved in the recognition of exogenous dsDNA in the cytosol: associates with exogenous dsDNA immediately after its appearance in the cytosol at endosome breakdown and is required to avoid autophagy. This Mus musculus (Mouse) protein is Barrier-to-autointegration factor.